The primary structure comprises 108 residues: Large ribosomal subunit protein uL22 (108 aa).

Belongs to the universal ribosomal protein uL22 family. In terms of assembly, part of the 50S ribosomal subunit.

Functionally, this protein binds specifically to 23S rRNA; its binding is stimulated by other ribosomal proteins, e.g. L4, L17, and L20. It is important during the early stages of 50S assembly. It makes multiple contacts with different domains of the 23S rRNA in the assembled 50S subunit and ribosome. Its function is as follows. The globular domain of the protein is located near the polypeptide exit tunnel on the outside of the subunit, while an extended beta-hairpin is found that lines the wall of the exit tunnel in the center of the 70S ribosome. The sequence is that of Large ribosomal subunit protein uL22 from Desulfatibacillum aliphaticivorans.